The sequence spans 296 residues: tRNA dimethylallyltransferase (296 aa).

10–17 (GPTASGKT) lines the ATP pocket. 12 to 17 (TASGKT) is a binding site for substrate. Residues 35 to 38 (DSRQ) form an interaction with substrate tRNA region.

This sequence belongs to the IPP transferase family. In terms of assembly, monomer. Mg(2+) is required as a cofactor.

The enzyme catalyses adenosine(37) in tRNA + dimethylallyl diphosphate = N(6)-dimethylallyladenosine(37) in tRNA + diphosphate. Its function is as follows. Catalyzes the transfer of a dimethylallyl group onto the adenine at position 37 in tRNAs that read codons beginning with uridine, leading to the formation of N6-(dimethylallyl)adenosine (i(6)A). The polypeptide is tRNA dimethylallyltransferase (Synechococcus sp. (strain RCC307)).